Reading from the N-terminus, the 434-residue chain is Glutamyl-tRNA reductase (434 aa).

Residues 49 to 52 (TCNR), Ser-109, 114 to 116 (EPQ), and Gln-120 contribute to the substrate site. Cys-50 serves as the catalytic Nucleophile. 189–194 (GAGEMC) lines the NADP(+) pocket.

Belongs to the glutamyl-tRNA reductase family. In terms of assembly, homodimer.

The catalysed reaction is (S)-4-amino-5-oxopentanoate + tRNA(Glu) + NADP(+) = L-glutamyl-tRNA(Glu) + NADPH + H(+). Its pathway is porphyrin-containing compound metabolism; protoporphyrin-IX biosynthesis; 5-aminolevulinate from L-glutamyl-tRNA(Glu): step 1/2. In terms of biological role, catalyzes the NADPH-dependent reduction of glutamyl-tRNA(Glu) to glutamate 1-semialdehyde (GSA). This chain is Glutamyl-tRNA reductase, found in Trichlorobacter lovleyi (strain ATCC BAA-1151 / DSM 17278 / SZ) (Geobacter lovleyi).